The sequence spans 245 residues: Eukaryotic translation initiation factor 3 subunit K (245 aa).

Residues 46 to 227 form the PCI domain; that stretch reads YDCYANLALL…EAKGTVVREN (182 aa).

It belongs to the eIF-3 subunit K family. In terms of assembly, component of the eukaryotic translation initiation factor 3 (eIF-3) complex.

It localises to the cytoplasm. In terms of biological role, component of the eukaryotic translation initiation factor 3 (eIF-3) complex, which is involved in protein synthesis of a specialized repertoire of mRNAs and, together with other initiation factors, stimulates binding of mRNA and methionyl-tRNAi to the 40S ribosome. The eIF-3 complex specifically targets and initiates translation of a subset of mRNAs involved in cell proliferation. The chain is Eukaryotic translation initiation factor 3 subunit K from Phaeosphaeria nodorum (strain SN15 / ATCC MYA-4574 / FGSC 10173) (Glume blotch fungus).